Reading from the N-terminus, the 453-residue chain is Bifunctional protein GlmU (453 aa).

A pyrophosphorylase region spans residues 1–227 (MNKLSVVILA…LMEVEGVNNR (227 aa)). UDP-N-acetyl-alpha-D-glucosamine is bound by residues 9-12 (LAAG), K23, Q74, 79-80 (GT), 101-103 (YGD), G138, E152, N167, and N225. Residue D103 participates in Mg(2+) binding. Mg(2+) is bound at residue N225. The tract at residues 228–248 (LQLANLERHFQRKQVEKLLLA) is linker. The tract at residues 249 to 453 (GVTFADPARF…ISNWQRPKRK (205 aa)) is N-acetyltransferase. R331 and K349 together coordinate UDP-N-acetyl-alpha-D-glucosamine. Residue H361 is the Proton acceptor of the active site. UDP-N-acetyl-alpha-D-glucosamine contacts are provided by Y364 and N375. Residues A378, 384–385 (NY), S403, A421, and R438 contribute to the acetyl-CoA site.

The protein in the N-terminal section; belongs to the N-acetylglucosamine-1-phosphate uridyltransferase family. In the C-terminal section; belongs to the transferase hexapeptide repeat family. As to quaternary structure, homotrimer. It depends on Mg(2+) as a cofactor.

Its subcellular location is the cytoplasm. The catalysed reaction is alpha-D-glucosamine 1-phosphate + acetyl-CoA = N-acetyl-alpha-D-glucosamine 1-phosphate + CoA + H(+). It catalyses the reaction N-acetyl-alpha-D-glucosamine 1-phosphate + UTP + H(+) = UDP-N-acetyl-alpha-D-glucosamine + diphosphate. It participates in nucleotide-sugar biosynthesis; UDP-N-acetyl-alpha-D-glucosamine biosynthesis; N-acetyl-alpha-D-glucosamine 1-phosphate from alpha-D-glucosamine 6-phosphate (route II): step 2/2. It functions in the pathway nucleotide-sugar biosynthesis; UDP-N-acetyl-alpha-D-glucosamine biosynthesis; UDP-N-acetyl-alpha-D-glucosamine from N-acetyl-alpha-D-glucosamine 1-phosphate: step 1/1. The protein operates within bacterial outer membrane biogenesis; LPS lipid A biosynthesis. Functionally, catalyzes the last two sequential reactions in the de novo biosynthetic pathway for UDP-N-acetylglucosamine (UDP-GlcNAc). The C-terminal domain catalyzes the transfer of acetyl group from acetyl coenzyme A to glucosamine-1-phosphate (GlcN-1-P) to produce N-acetylglucosamine-1-phosphate (GlcNAc-1-P), which is converted into UDP-GlcNAc by the transfer of uridine 5-monophosphate (from uridine 5-triphosphate), a reaction catalyzed by the N-terminal domain. The sequence is that of Bifunctional protein GlmU from Histophilus somni (strain 129Pt) (Haemophilus somnus).